We begin with the raw amino-acid sequence, 162 residues long: Glutathione peroxidase-like peroxiredoxin GPX5 (162 aa).

An S-selanylcysteine modification is found at cysteine 38. Asparagine 87 is a catalytic residue.

The protein belongs to the glutathione peroxidase family. Post-translationally, cys-87 is S-selanylated when selenium levels are high. S-selanylation may increase or be important for glutathione peroxidase activity.

The protein resides in the cytoplasm. The catalysed reaction is 2 glutathione + H2O2 = glutathione disulfide + 2 H2O. It carries out the reaction a hydroperoxide + [thioredoxin]-dithiol = an alcohol + [thioredoxin]-disulfide + H2O. Has thioredoxin peroxidase activity. May also have glutathione peroxidase activity, although this activity is controversial. Protects cells against reactive oxygen species, which may include photooxidative stress, hydrogen peroxide and organic hydroperoxides. The chain is Glutathione peroxidase-like peroxiredoxin GPX5 from Chlamydomonas reinhardtii (Chlamydomonas smithii).